The sequence spans 22 residues: Caerin-3.5 (22 aa).

The residue at position 22 (Lys22) is a Lysine amide.

Expressed by the skin dorsal glands.

Its subcellular location is the secreted. In terms of biological role, shows significant activity against Gram-positive organisms, but is less effective against Gram-negative organisms. The polypeptide is Caerin-3.5 (Ranoidea gracilenta (Dainty green tree frog)).